The chain runs to 615 residues: Dehydrogenase str4 (615 aa).

Residues Thr45–Ala46, Glu66–Ala67, and Asn123–Met126 each bind FAD. His552 serves as the catalytic Proton acceptor. Residues Ala585 and Pro596 to Ala597 each bind FAD.

Belongs to the GMC oxidoreductase family. As to quaternary structure, homodimer. FAD serves as cofactor.

It functions in the pathway mycotoxin biosynthesis. Functionally, dehydrogenase; part of the gene cluster that mediates the biosynthesis of strobilurin A, an antifungal polyketide that contains a key beta-methoxyacrylate toxophore that targets the complex III of the mitochondrial electron transport chain. Strobilurin biosynthesis begins with construction of benzoyl CoA by step-wise elimination of ammonia from phenylalanine by the phenylalanine ammonia-lyase str11, oxygenation by str8 and retro-Claisen reaction to form benzoic acid, which is activated to its CoA thiolester benzoyl CoA by the dedicated CoA ligase str10. Benzoyl CoA forms the starter unit for the highly reducing polyketide synthase stpks1 that produces the polyketide prestrobilutin A. The FAD-dependent oxygenase str9 then catalyzes the key oxidative rearrangement responsible for the creation of the beta-methoxyacrylate toxophore. Str9 performs epoxidation of the 2,3 olefin of prestrobilutin A, followed by Meinwald rearrangement to furnish the aldehyde intermediate. Rapid enolization of the aldehyde intermediate would give the beta-methoxyacrylate skeleton and methylations catalyzed by str2 and str3 complete the synthesis and lead to the production of strobilurin A. The short-chain dehydrogenase stl2 and the dehydrogenase str4 play a role in the shunt pathway leading to the production of bolineol. The cluster encodes no obvious halogenase gene that could be involved in production of strobilurin B, nor any obvious dimethylallyl-transferase that could be involved in the production of strobilurin G. It is possible that unknown proteins encoded in, or near, the cluster (such as str1 or stl1) may form new classes of halogenases or dimethylally-transferases, or that the responsible genes are located elsewhere on the genome. Similarly, proteins encoded by str5/str6 hydrolases appear to have no chemical role in the biosynthesis of strobilurin A. Finally, no obvious self-resistance gene is found within the cluster. The sequence is that of Dehydrogenase str4 from Strobilurus tenacellus.